The following is a 152-amino-acid chain: Xanthine-guanine phosphoribosyltransferase (152 aa).

5-phospho-alpha-D-ribose 1-diphosphate is bound by residues 37–38 (RG), Arg69, and 88–96 (DDLVDTGGT). Residue Arg69 coordinates GMP. Position 89 (Asp89) interacts with Mg(2+). 2 residues coordinate guanine: Asp92 and Ile135. Residues Asp92 and Ile135 each contribute to the xanthine site. Residues 92–96 (DTGGT) and 134–135 (WI) each bind GMP.

The protein belongs to the purine/pyrimidine phosphoribosyltransferase family. XGPT subfamily. In terms of assembly, homotetramer. Requires Mg(2+) as cofactor.

The protein localises to the cell inner membrane. It catalyses the reaction GMP + diphosphate = guanine + 5-phospho-alpha-D-ribose 1-diphosphate. It carries out the reaction XMP + diphosphate = xanthine + 5-phospho-alpha-D-ribose 1-diphosphate. The catalysed reaction is IMP + diphosphate = hypoxanthine + 5-phospho-alpha-D-ribose 1-diphosphate. The protein operates within purine metabolism; GMP biosynthesis via salvage pathway; GMP from guanine: step 1/1. It functions in the pathway purine metabolism; XMP biosynthesis via salvage pathway; XMP from xanthine: step 1/1. Its function is as follows. Purine salvage pathway enzyme that catalyzes the transfer of the ribosyl-5-phosphate group from 5-phospho-alpha-D-ribose 1-diphosphate (PRPP) to the N9 position of the 6-oxopurines guanine and xanthine to form the corresponding ribonucleotides GMP (guanosine 5'-monophosphate) and XMP (xanthosine 5'-monophosphate), with the release of PPi. To a lesser extent, also acts on hypoxanthine. The chain is Xanthine-guanine phosphoribosyltransferase from Edwardsiella ictaluri (strain 93-146).